The following is a 523-amino-acid chain: Bifunctional purine biosynthesis protein PurH (523 aa).

The region spanning 1 to 149 is the MGS-like domain; that stretch reads MSDPVIKRAL…KNNESVTVIT (149 aa).

The protein belongs to the PurH family.

The enzyme catalyses (6R)-10-formyltetrahydrofolate + 5-amino-1-(5-phospho-beta-D-ribosyl)imidazole-4-carboxamide = 5-formamido-1-(5-phospho-D-ribosyl)imidazole-4-carboxamide + (6S)-5,6,7,8-tetrahydrofolate. It catalyses the reaction IMP + H2O = 5-formamido-1-(5-phospho-D-ribosyl)imidazole-4-carboxamide. It functions in the pathway purine metabolism; IMP biosynthesis via de novo pathway; 5-formamido-1-(5-phospho-D-ribosyl)imidazole-4-carboxamide from 5-amino-1-(5-phospho-D-ribosyl)imidazole-4-carboxamide (10-formyl THF route): step 1/1. Its pathway is purine metabolism; IMP biosynthesis via de novo pathway; IMP from 5-formamido-1-(5-phospho-D-ribosyl)imidazole-4-carboxamide: step 1/1. This Chlorobaculum parvum (strain DSM 263 / NCIMB 8327) (Chlorobium vibrioforme subsp. thiosulfatophilum) protein is Bifunctional purine biosynthesis protein PurH.